A 521-amino-acid polypeptide reads, in one-letter code: Protein nucleotidyltransferase YdiU (521 aa).

Residues Gly109, Gly111, Arg112, Lys131, Asp143, Gly144, Arg194, and Arg201 each coordinate ATP. Catalysis depends on Asp270, which acts as the Proton acceptor. Residues Asn271 and Asp280 each contribute to the Mg(2+) site. Asp280 is a binding site for ATP.

Belongs to the SELO family. Requires Mg(2+) as cofactor. It depends on Mn(2+) as a cofactor.

The catalysed reaction is L-seryl-[protein] + ATP = 3-O-(5'-adenylyl)-L-seryl-[protein] + diphosphate. It catalyses the reaction L-threonyl-[protein] + ATP = 3-O-(5'-adenylyl)-L-threonyl-[protein] + diphosphate. It carries out the reaction L-tyrosyl-[protein] + ATP = O-(5'-adenylyl)-L-tyrosyl-[protein] + diphosphate. The enzyme catalyses L-histidyl-[protein] + UTP = N(tele)-(5'-uridylyl)-L-histidyl-[protein] + diphosphate. The catalysed reaction is L-seryl-[protein] + UTP = O-(5'-uridylyl)-L-seryl-[protein] + diphosphate. It catalyses the reaction L-tyrosyl-[protein] + UTP = O-(5'-uridylyl)-L-tyrosyl-[protein] + diphosphate. Functionally, nucleotidyltransferase involved in the post-translational modification of proteins. It can catalyze the addition of adenosine monophosphate (AMP) or uridine monophosphate (UMP) to a protein, resulting in modifications known as AMPylation and UMPylation. The chain is Protein nucleotidyltransferase YdiU from Burkholderia mallei (strain ATCC 23344).